The following is a 500-amino-acid chain: Lysine--tRNA ligase (500 aa).

Mg(2+) contacts are provided by Glu410 and Glu417.

Belongs to the class-II aminoacyl-tRNA synthetase family. As to quaternary structure, homodimer. It depends on Mg(2+) as a cofactor.

The protein resides in the cytoplasm. The enzyme catalyses tRNA(Lys) + L-lysine + ATP = L-lysyl-tRNA(Lys) + AMP + diphosphate. In Shewanella baltica (strain OS155 / ATCC BAA-1091), this protein is Lysine--tRNA ligase.